Reading from the N-terminus, the 313-residue chain is Ribosomal RNA small subunit methyltransferase H (313 aa).

S-adenosyl-L-methionine contacts are provided by residues 35 to 37 (GGH), aspartate 55, phenylalanine 79, aspartate 101, and glutamine 108.

This sequence belongs to the methyltransferase superfamily. RsmH family.

The protein resides in the cytoplasm. The catalysed reaction is cytidine(1402) in 16S rRNA + S-adenosyl-L-methionine = N(4)-methylcytidine(1402) in 16S rRNA + S-adenosyl-L-homocysteine + H(+). Specifically methylates the N4 position of cytidine in position 1402 (C1402) of 16S rRNA. The polypeptide is Ribosomal RNA small subunit methyltransferase H (Musicola paradisiaca (strain Ech703) (Dickeya paradisiaca)).